We begin with the raw amino-acid sequence, 270 residues long: NAD(P)H-hydrate epimerase (270 aa).

The region spanning 25 to 234 is the YjeF N-terminal domain; it reads FQQLMDLMQN…DLLAPEEIYQ (210 aa). Position 73–77 (73–77) interacts with (6S)-NADPHX; that stretch reads DNGGQ. Residues asparagine 74 and aspartate 144 each coordinate K(+). Residues 148–154 and glutamate 177 contribute to the (6S)-NADPHX site; that span reads GVGLYGH. K(+) is bound at residue threonine 180.

The protein belongs to the NnrE/AIBP family. K(+) is required as a cofactor.

It carries out the reaction (6R)-NADHX = (6S)-NADHX. It catalyses the reaction (6R)-NADPHX = (6S)-NADPHX. Its function is as follows. Catalyzes the epimerization of the S- and R-forms of NAD(P)HX, a damaged form of NAD(P)H that is a result of enzymatic or heat-dependent hydration. This is a prerequisite for the S-specific NAD(P)H-hydrate dehydratase to allow the repair of both epimers of NAD(P)HX. The protein is NAD(P)H-hydrate epimerase of Legionella pneumophila (strain Paris).